Consider the following 436-residue polypeptide: Gamma-glutamyl phosphate reductase (436 aa).

Belongs to the gamma-glutamyl phosphate reductase family.

The protein resides in the cytoplasm. It catalyses the reaction L-glutamate 5-semialdehyde + phosphate + NADP(+) = L-glutamyl 5-phosphate + NADPH + H(+). Its pathway is amino-acid biosynthesis; L-proline biosynthesis; L-glutamate 5-semialdehyde from L-glutamate: step 2/2. Catalyzes the NADPH-dependent reduction of L-glutamate 5-phosphate into L-glutamate 5-semialdehyde and phosphate. The product spontaneously undergoes cyclization to form 1-pyrroline-5-carboxylate. This chain is Gamma-glutamyl phosphate reductase, found in Prochlorococcus marinus (strain MIT 9215).